The following is a 292-amino-acid chain: Imipenem-hydrolyzing beta-lactamase (292 aa).

An N-terminal signal peptide occupies residues 1-27 (MSLNVKQSRIAILFSSCLISISFFSQA). A disulfide bridge links cysteine 70 with cysteine 240. Serine 71 serves as the catalytic Acyl-ester intermediate. 236–238 (KTG) lines the substrate pocket.

Belongs to the class-A beta-lactamase family.

The enzyme catalyses a beta-lactam + H2O = a substituted beta-amino acid. Hydrolyzes carbapenems such as imipenem, which are extended-spectrum beta-lactam antibiotics. This chain is Imipenem-hydrolyzing beta-lactamase (nmcA), found in Enterobacter cloacae.